A 190-amino-acid chain; its full sequence is dTTP/UTP pyrophosphatase (190 aa).

Residue aspartate 70 is the Proton acceptor of the active site.

This sequence belongs to the Maf family. YhdE subfamily. A divalent metal cation serves as cofactor.

It localises to the cytoplasm. The enzyme catalyses dTTP + H2O = dTMP + diphosphate + H(+). The catalysed reaction is UTP + H2O = UMP + diphosphate + H(+). Its function is as follows. Nucleoside triphosphate pyrophosphatase that hydrolyzes dTTP and UTP. May have a dual role in cell division arrest and in preventing the incorporation of modified nucleotides into cellular nucleic acids. The chain is dTTP/UTP pyrophosphatase from Gloeobacter violaceus (strain ATCC 29082 / PCC 7421).